Here is a 203-residue protein sequence, read N- to C-terminus: Probable cytochrome c oxidase subunit 3 (203 aa).

The next 5 membrane-spanning stretches (helical) occupy residues 30–50 (IIWL…YFVA), 69–89 (LAVP…MGVF), 102–122 (WYFI…YEYY), 142–162 (ITTG…VFLL), and 179–199 (IVVS…FATI).

This sequence belongs to the cytochrome c oxidase subunit 3 family.

It localises to the cell membrane. The catalysed reaction is 4 Fe(II)-[cytochrome c] + O2 + 8 H(+)(in) = 4 Fe(III)-[cytochrome c] + 2 H2O + 4 H(+)(out). The polypeptide is Probable cytochrome c oxidase subunit 3 (ctaE) (Nocardia farcinica (strain IFM 10152)).